The primary structure comprises 747 residues: Asparagine synthetase [glutamine-hydrolyzing] 2 (747 aa).

Residue Cys2 is the For GATase activity of the active site. A Glutamine amidotransferase type-2 domain is found at 2 to 218 (CGLAGIINLA…AGHYLEINLT (217 aa)). L-glutamine is bound by residues 52-56 (RLSIL), 77-79 (NGE), and Asp100. An ATP-binding site is contributed by 395–396 (SP).

This sequence belongs to the asparagine synthetase family.

The catalysed reaction is L-aspartate + L-glutamine + ATP + H2O = L-asparagine + L-glutamate + AMP + diphosphate + H(+). The protein operates within amino-acid biosynthesis; L-asparagine biosynthesis; L-asparagine from L-aspartate (L-Gln route): step 1/1. The chain is Asparagine synthetase [glutamine-hydrolyzing] 2 (asnH) from Bacillus subtilis (strain 168).